A 146-amino-acid polypeptide reads, in one-letter code: Protein MGF 100-3L (146 aa).

This sequence belongs to the asfivirus MGF 100 family.

Its function is as follows. Plays a role in virus cell tropism, and may be required for efficient virus replication in macrophages. In Ornithodoros (relapsing fever ticks), this protein is Protein MGF 100-3L.